The chain runs to 345 residues: Anthranilate phosphoribosyltransferase (345 aa).

5-phospho-alpha-D-ribose 1-diphosphate is bound by residues Gly80, 83-84, Thr88, 90-93, 108-116, and Ser120; these read GD, NIST, and KHGNRSVSS. Gly80 provides a ligand contact to anthranilate. Ser92 is a Mg(2+) binding site. An anthranilate-binding site is contributed by Asn111. Arg166 lines the anthranilate pocket. Positions 225 and 226 each coordinate Mg(2+).

The protein belongs to the anthranilate phosphoribosyltransferase family. In terms of assembly, homodimer. The cofactor is Mg(2+).

The catalysed reaction is N-(5-phospho-beta-D-ribosyl)anthranilate + diphosphate = 5-phospho-alpha-D-ribose 1-diphosphate + anthranilate. The protein operates within amino-acid biosynthesis; L-tryptophan biosynthesis; L-tryptophan from chorismate: step 2/5. Catalyzes the transfer of the phosphoribosyl group of 5-phosphorylribose-1-pyrophosphate (PRPP) to anthranilate to yield N-(5'-phosphoribosyl)-anthranilate (PRA). In Pelotomaculum thermopropionicum (strain DSM 13744 / JCM 10971 / SI), this protein is Anthranilate phosphoribosyltransferase.